Consider the following 406-residue polypeptide: Vacuole membrane protein 1 (406 aa).

The span at Met-1–Asn-21 shows a compositional bias: basic and acidic residues. The tract at residues Met-1–Arg-35 is disordered. Ala-2 is modified (N-acetylalanine). The Cytoplasmic portion of the chain corresponds to Ala-2 to Asn-43. A helical transmembrane segment spans residues Ile-44 to Ile-64. The Extracellular segment spans residues Leu-65–Ser-77. The chain crosses the membrane as a helical span at residues Ile-78 to Val-98. The Cytoplasmic portion of the chain corresponds to His-99–Gln-109. Residues Phe-110–Gly-130 form a helical membrane-spanning segment. Topologically, residues Leu-131 to Lys-250 are extracellular. The tract at residues Gly-173–Ile-316 is VTT domain. A helical transmembrane segment spans residues Leu-251–Phe-271. The Cytoplasmic segment spans residues Asp-272–Leu-273. A helical transmembrane segment spans residues Ala-274–Ile-294. The Extracellular portion of the chain corresponds to Gly-295–Lys-305. A helical transmembrane segment spans residues Ile-306–Ala-326. The Cytoplasmic segment spans residues Val-327–Trp-363. A helical transmembrane segment spans residues Leu-364 to Ile-384. Over Asn-385–Lys-406 the chain is Extracellular.

The protein belongs to the VMP1 family. In terms of assembly, interacts with BECN1. Interacts with TJP1. Interacts with TP53INP2. Interacts with TMEM41B. Interacts with ATP2A2, PLN and SLN; competes with PLN and SLN to prevent them from forming an inhibitory complex with ATP2A2. Interacts with ATG2A.

The protein localises to the endoplasmic reticulum-Golgi intermediate compartment membrane. The protein resides in the cell membrane. It is found in the vacuole membrane. Its subcellular location is the endoplasmic reticulum membrane. It catalyses the reaction a 1,2-diacyl-sn-glycero-3-phospho-L-serine(in) = a 1,2-diacyl-sn-glycero-3-phospho-L-serine(out). The enzyme catalyses cholesterol(in) = cholesterol(out). The catalysed reaction is a 1,2-diacyl-sn-glycero-3-phosphocholine(in) = a 1,2-diacyl-sn-glycero-3-phosphocholine(out). It carries out the reaction a 1,2-diacyl-sn-glycero-3-phosphoethanolamine(in) = a 1,2-diacyl-sn-glycero-3-phosphoethanolamine(out). Its function is as follows. Phospholipid scramblase involved in lipid homeostasis and membrane dynamics processes. Has phospholipid scramblase activity toward cholesterol and phosphatidylserine, as well as phosphatidylethanolamine and phosphatidylcholine. Required for autophagosome formation: participates in early stages of autophagosome biogenesis at the endoplasmic reticulum (ER) membrane by reequilibrating the leaflets of the ER as lipids are extracted by ATG2 (ATG2A or ATG2B) to mediate autophagosome assembly. Regulates ATP2A2 activity to control ER-isolation membrane contacts for autophagosome formation. In addition to autophagy, involved in other processes in which phospholipid scramblase activity is required. Modulates ER contacts with lipid droplets, mitochondria and endosomes. Plays an essential role in formation of cell junctions. Upon stress such as bacterial and viral infection, promotes formation of cytoplasmic vacuoles followed by cell death. Involved in the cytoplasmic vacuolization of acinar cells during the early stage of acute pancreatitis. (Microbial infection) Host factor required for infection by all flaviviruses tested such as Zika virus and Yellow fever virus. Probably required post-entry of the virus to facilitate the ER membrane remodeling necessary to form replication organelles. The protein is Vacuole membrane protein 1 of Homo sapiens (Human).